The primary structure comprises 318 residues: NADH-ubiquinone oxidoreductase chain 1 (318 aa).

A run of 9 helical transmembrane segments spans residues 2–22, 37–57, 69–89, 100–120, 136–156, 171–191, 231–251, 253–273, and 293–313; these read FLMNILCLVIPILLAMAFLTL, PNIVGPYGLLQPIADAIKLFI, LMFTLAPTLAFTLALSLWIPM, LGVLFILALSSLAVYSILWSG, VAQTISYEVTLAIILLSIMMM, HMWLIFPLWPLAMMWFISTLA, IIMMNALTTTLFLGAFHNPLF, ELFTVNFITKTLILTMMFLWV, and FLPLTLALCMFHVSMPALSAG.

The protein belongs to the complex I subunit 1 family. As to quaternary structure, core subunit of respiratory chain NADH dehydrogenase (Complex I) which is composed of 45 different subunits.

The protein localises to the mitochondrion inner membrane. It catalyses the reaction a ubiquinone + NADH + 5 H(+)(in) = a ubiquinol + NAD(+) + 4 H(+)(out). Its function is as follows. Core subunit of the mitochondrial membrane respiratory chain NADH dehydrogenase (Complex I) which catalyzes electron transfer from NADH through the respiratory chain, using ubiquinone as an electron acceptor. Essential for the catalytic activity and assembly of complex I. This chain is NADH-ubiquinone oxidoreductase chain 1 (MT-ND1), found in Euphractus sexcinctus (Six-banded armadillo).